The chain runs to 278 residues: Large ribosomal subunit protein uL2 (278 aa).

Disordered regions lie at residues 33–57 (LIRP…KGGG) and 224–278 (VVMN…GKKR). The segment covering 45 to 57 (AHGRITTRHKGGG) has biased composition (basic residues). A compositionally biased stretch (basic and acidic residues) spans 253–268 (PEGRTRKPNKASDKLI). Over residues 269–278 (VRRRRTGKKR) the composition is skewed to basic residues.

The protein belongs to the universal ribosomal protein uL2 family. In terms of assembly, part of the 50S ribosomal subunit. Forms a bridge to the 30S subunit in the 70S ribosome.

Its function is as follows. One of the primary rRNA binding proteins. Required for association of the 30S and 50S subunits to form the 70S ribosome, for tRNA binding and peptide bond formation. It has been suggested to have peptidyltransferase activity; this is somewhat controversial. Makes several contacts with the 16S rRNA in the 70S ribosome. The protein is Large ribosomal subunit protein uL2 of Mycobacteroides abscessus (strain ATCC 19977 / DSM 44196 / CCUG 20993 / CIP 104536 / JCM 13569 / NCTC 13031 / TMC 1543 / L948) (Mycobacterium abscessus).